A 504-amino-acid polypeptide reads, in one-letter code: MTTKIKSEEISSIIKERIENFNINIDISETGKVIAYADGVAKVYGLNNVMYYEMVEFDTGDTGIAFNLEESSVGVVVLGSGRTIKEGTSVKRLKKLMKVPVGDAIVGRVINTLGEPIDGKGAIEANEYRFVEEKAPGIMARKSVHQPLQTGLKAIDALVPIGRGQRELIIGDRQTGKTTVAIDTIINQKGQDVICIYVAVGQKESTVAQVVRKLEEHGAMDYTVVVNAPASFSAAMQFLAPYTGVTIGEYFRDNARHALIIYDDLSKHAVAYREMSLILRRPPGREAFPGDVFYLHSRLLERAAKLNDELGAGSLTALPIIETQAGDVAAYIPTNVISITDGQIFLETDLFNSGIRPAINVGLSVSRVGGAAQIKATKQVAGTLRLDLAQYRELQAFSQFASDLDESSRKQLERGQRMVEILKQPPYSPLSIEKQVIIIYAGANGYLDNIPANKVIKFESELYPFLEAKYPKIFEDISVKKAIDKETEAELSKALEEFKINFGA.

171 to 178 (GDRQTGKT) is an ATP binding site.

This sequence belongs to the ATPase alpha/beta chains family. In terms of assembly, F-type ATPases have 2 components, CF(1) - the catalytic core - and CF(0) - the membrane proton channel. CF(1) has five subunits: alpha(3), beta(3), gamma(1), delta(1), epsilon(1). CF(0) has three main subunits: a(1), b(2) and c(9-12). The alpha and beta chains form an alternating ring which encloses part of the gamma chain. CF(1) is attached to CF(0) by a central stalk formed by the gamma and epsilon chains, while a peripheral stalk is formed by the delta and b chains.

It is found in the cell inner membrane. The catalysed reaction is ATP + H2O + 4 H(+)(in) = ADP + phosphate + 5 H(+)(out). Produces ATP from ADP in the presence of a proton gradient across the membrane. The alpha chain is a regulatory subunit. The polypeptide is ATP synthase subunit alpha (Helicobacter hepaticus (strain ATCC 51449 / 3B1)).